Consider the following 130-residue polypeptide: Iron-sulfur cluster insertion protein ErpA 2 (130 aa).

Iron-sulfur cluster contacts are provided by cysteine 58, cysteine 122, and cysteine 124.

The protein belongs to the HesB/IscA family. Homodimer. Iron-sulfur cluster serves as cofactor.

Its function is as follows. Required for insertion of 4Fe-4S clusters for at least IspG. This Methylococcus capsulatus (strain ATCC 33009 / NCIMB 11132 / Bath) protein is Iron-sulfur cluster insertion protein ErpA 2.